Consider the following 289-residue polypeptide: N-acetylmuramoyl-L-alanine amidase AmiA (289 aa).

The tat-type signal signal peptide spans 1-34 (MSTFKLLKTLTSRRQVLKTGLAALTLSGMSHAVA). The tract at residues 36 to 61 (EETLKTSNGHSKPKTKKTGSKRLVML) is disordered. Basic residues predominate over residues 46 to 55 (SKPKTKKTGS). The 215-residue stretch at 59 to 273 (VMLDPGHGGI…IATAIANGII (215 aa)) folds into the MurNAc-LAA domain.

The protein belongs to the N-acetylmuramoyl-L-alanine amidase 3 family. In terms of processing, predicted to be exported by the Tat system. The position of the signal peptide cleavage has not been experimentally proven.

The protein localises to the periplasm. The catalysed reaction is Hydrolyzes the link between N-acetylmuramoyl residues and L-amino acid residues in certain cell-wall glycopeptides.. Its function is as follows. Cell-wall hydrolase involved in septum cleavage during cell division. The sequence is that of N-acetylmuramoyl-L-alanine amidase AmiA (amiA) from Salmonella typhimurium (strain LT2 / SGSC1412 / ATCC 700720).